The primary structure comprises 343 residues: DNA repair and recombination protein RadA (343 aa).

ATP is bound at residue 107 to 114 (GEFGAGKS).

This sequence belongs to the eukaryotic RecA-like protein family.

In terms of biological role, involved in DNA repair and in homologous recombination. Binds and assemble on single-stranded DNA to form a nucleoprotein filament. Hydrolyzes ATP in a ssDNA-dependent manner and promotes DNA strand exchange between homologous DNA molecules. The chain is DNA repair and recombination protein RadA from Halobacterium salinarum (strain ATCC 29341 / DSM 671 / R1).